The sequence spans 278 residues: Putative phosphatase MG265 (278 aa).

Asp-9 functions as the Nucleophile in the catalytic mechanism. Mg(2+) is bound at residue Asp-9. A phosphate-binding site is contributed by Leu-10. Asp-11 serves as a coordination point for Mg(2+). Phosphate-binding positions include 43-44 (SG) and Lys-204. Asp-227 lines the Mg(2+) pocket. Asn-230 serves as a coordination point for phosphate.

This sequence belongs to the HAD-like hydrolase superfamily. Cof family. Mg(2+) is required as a cofactor.

The protein is Putative phosphatase MG265 of Mycoplasma genitalium (strain ATCC 33530 / DSM 19775 / NCTC 10195 / G37) (Mycoplasmoides genitalium).